We begin with the raw amino-acid sequence, 508 residues long: Glutamyl-tRNA(Gln) amidotransferase subunit B, mitochondrial (508 aa).

The protein belongs to the GatB/GatE family. GatB subfamily. As to quaternary structure, subunit of the heterotrimeric GatFAB amidotransferase (AdT) complex, composed of A, B and F subunits.

The protein resides in the mitochondrion. It catalyses the reaction L-glutamyl-tRNA(Gln) + L-glutamine + ATP + H2O = L-glutaminyl-tRNA(Gln) + L-glutamate + ADP + phosphate + H(+). Functionally, allows the formation of correctly charged Gln-tRNA(Gln) through the transamidation of misacylated Glu-tRNA(Gln) in the mitochondria. The reaction takes place in the presence of glutamine and ATP through an activated gamma-phospho-Glu-tRNA(Gln). The protein is Glutamyl-tRNA(Gln) amidotransferase subunit B, mitochondrial of Scheffersomyces stipitis (strain ATCC 58785 / CBS 6054 / NBRC 10063 / NRRL Y-11545) (Yeast).